Consider the following 716-residue polypeptide: Fatty acid oxidation complex subunit alpha (716 aa).

The enoyl-CoA hydratase/isomerase stretch occupies residues 1-189 (MIYQSPTIQV…KVGAVDAVVA (189 aa)). Residue D296 participates in substrate binding. A 3-hydroxyacyl-CoA dehydrogenase region spans residues 311 to 716 (KAVNSAAVLG…AANNGSYYQA (406 aa)). Residues M324, D343, 400–402 (VVE), K407, and S429 each bind NAD(+). H450 acts as the For 3-hydroxyacyl-CoA dehydrogenase activity in catalysis. An NAD(+)-binding site is contributed by N453. N500 and Y660 together coordinate substrate.

This sequence in the N-terminal section; belongs to the enoyl-CoA hydratase/isomerase family. It in the C-terminal section; belongs to the 3-hydroxyacyl-CoA dehydrogenase family. Heterotetramer of two alpha chains (FadB) and two beta chains (FadA).

It carries out the reaction a (3S)-3-hydroxyacyl-CoA + NAD(+) = a 3-oxoacyl-CoA + NADH + H(+). It catalyses the reaction a (3S)-3-hydroxyacyl-CoA = a (2E)-enoyl-CoA + H2O. The enzyme catalyses a 4-saturated-(3S)-3-hydroxyacyl-CoA = a (3E)-enoyl-CoA + H2O. The catalysed reaction is (3S)-3-hydroxybutanoyl-CoA = (3R)-3-hydroxybutanoyl-CoA. It carries out the reaction a (3Z)-enoyl-CoA = a 4-saturated (2E)-enoyl-CoA. It catalyses the reaction a (3E)-enoyl-CoA = a 4-saturated (2E)-enoyl-CoA. It functions in the pathway lipid metabolism; fatty acid beta-oxidation. In terms of biological role, involved in the aerobic and anaerobic degradation of long-chain fatty acids via beta-oxidation cycle. Catalyzes the formation of 3-oxoacyl-CoA from enoyl-CoA via L-3-hydroxyacyl-CoA. It can also use D-3-hydroxyacyl-CoA and cis-3-enoyl-CoA as substrate. The sequence is that of Fatty acid oxidation complex subunit alpha from Shewanella oneidensis (strain ATCC 700550 / JCM 31522 / CIP 106686 / LMG 19005 / NCIMB 14063 / MR-1).